Here is a 125-residue protein sequence, read N- to C-terminus: Snaclec botrocetin subunit beta (125 aa).

3 disulfides stabilise this stretch: Cys2-Cys13, Cys30-Cys121, and Cys98-Cys113. One can recognise a C-type lectin domain in the interval 9 to 122 (YEGHCYRFFK…CTRFKNFVCE (114 aa)).

Belongs to the snaclec family. Heterodimer of subunits alpha and beta; disulfide-linked. Botrocetin and vWF form a soluble complex. Expressed by the venom gland.

The protein resides in the secreted. Functionally, snaclec that binds to von Willebrand factor (VWF) and induces its interaction with GPIbalpha (GP1BA) (via the vWF A1 domain), resulting in platelet aggregation. The chain is Snaclec botrocetin subunit beta from Bothrops jararaca (Jararaca).